Here is a 191-residue protein sequence, read N- to C-terminus: Methylated-DNA--protein-cysteine methyltransferase (191 aa).

DNA is bound by residues Tyr-120 and Arg-134. Cys-151 serves as the catalytic Nucleophile; methyl group acceptor.

Belongs to the MGMT family.

It is found in the nucleus. It carries out the reaction a 6-O-methyl-2'-deoxyguanosine in DNA + L-cysteinyl-[protein] = S-methyl-L-cysteinyl-[protein] + a 2'-deoxyguanosine in DNA. The enzyme catalyses a 4-O-methyl-thymidine in DNA + L-cysteinyl-[protein] = a thymidine in DNA + S-methyl-L-cysteinyl-[protein]. In terms of biological role, involved in the cellular defense against the biological effects of O6-methylguanine (O6-MeG) and O4-methylthymine (O4-MeT) in DNA. Repairs the methylated nucleobase in DNA by stoichiometrically transferring the methyl group to a cysteine residue in the enzyme. This is a suicide reaction: the enzyme is irreversibly inactivated. The chain is Methylated-DNA--protein-cysteine methyltransferase (MGT1) from Debaryomyces hansenii (strain ATCC 36239 / CBS 767 / BCRC 21394 / JCM 1990 / NBRC 0083 / IGC 2968) (Yeast).